Reading from the N-terminus, the 300-residue chain is UDP-N-acetylenolpyruvoylglucosamine reductase (300 aa).

The 166-residue stretch at 28–193 folds into the FAD-binding PCMH-type domain; sequence KTGGPADVLA…LQATFALEKG (166 aa). The active site involves Arg172. Ser222 acts as the Proton donor in catalysis. Residue Glu292 is part of the active site.

Belongs to the MurB family. The cofactor is FAD.

Its subcellular location is the cytoplasm. It carries out the reaction UDP-N-acetyl-alpha-D-muramate + NADP(+) = UDP-N-acetyl-3-O-(1-carboxyvinyl)-alpha-D-glucosamine + NADPH + H(+). The protein operates within cell wall biogenesis; peptidoglycan biosynthesis. Functionally, cell wall formation. This Enterococcus faecalis (strain ATCC 700802 / V583) protein is UDP-N-acetylenolpyruvoylglucosamine reductase.